The following is a 458-amino-acid chain: tRNA-2-methylthio-N(6)-dimethylallyladenosine synthase (458 aa).

The MTTase N-terminal domain maps to 15–134 (KKVFIKTYGC…LPDLLEQTKQ (120 aa)). [4Fe-4S] cluster is bound by residues cysteine 24, cysteine 60, cysteine 97, cysteine 175, cysteine 179, and cysteine 182. The Radical SAM core domain maps to 161–393 (RKRGVSAFLT…QVLLLEQQNA (233 aa)). Residues 396-457 (RSKIGQTTDV…SNSFVGEIAN (62 aa)) enclose the TRAM domain.

The protein belongs to the methylthiotransferase family. MiaB subfamily. Monomer. It depends on [4Fe-4S] cluster as a cofactor.

It localises to the cytoplasm. It carries out the reaction N(6)-dimethylallyladenosine(37) in tRNA + (sulfur carrier)-SH + AH2 + 2 S-adenosyl-L-methionine = 2-methylsulfanyl-N(6)-dimethylallyladenosine(37) in tRNA + (sulfur carrier)-H + 5'-deoxyadenosine + L-methionine + A + S-adenosyl-L-homocysteine + 2 H(+). In terms of biological role, catalyzes the methylthiolation of N6-(dimethylallyl)adenosine (i(6)A), leading to the formation of 2-methylthio-N6-(dimethylallyl)adenosine (ms(2)i(6)A) at position 37 in tRNAs that read codons beginning with uridine. This chain is tRNA-2-methylthio-N(6)-dimethylallyladenosine synthase, found in Bartonella quintana (strain Toulouse) (Rochalimaea quintana).